Here is a 132-residue protein sequence, read N- to C-terminus: Small ribosomal subunit protein uS8 (132 aa).

It belongs to the universal ribosomal protein uS8 family. Part of the 30S ribosomal subunit. Contacts proteins S5 and S12.

Its function is as follows. One of the primary rRNA binding proteins, it binds directly to 16S rRNA central domain where it helps coordinate assembly of the platform of the 30S subunit. The polypeptide is Small ribosomal subunit protein uS8 (Afipia carboxidovorans (strain ATCC 49405 / DSM 1227 / KCTC 32145 / OM5) (Oligotropha carboxidovorans)).